Here is a 298-residue protein sequence, read N- to C-terminus: GTPase Era (298 aa).

Residues 3-170 (KSGFVAILGR…IKLLTDNLEE (168 aa)) enclose the Era-type G domain. The interval 11–18 (GRPNVGKS) is G1. Residue 11–18 (GRPNVGKS) coordinates GTP. The tract at residues 37–41 (QTTRN) is G2. The interval 58-61 (DTPG) is G3. Residues 58-62 (DTPGI) and 120-123 (NKID) contribute to the GTP site. Residues 120–123 (NKID) are G4. Residues 149 to 151 (ISA) form a G5 region. The KH type-2 domain occupies 201–279 (TQQEVPHSVA…YLETWVKVKK (79 aa)).

Belongs to the TRAFAC class TrmE-Era-EngA-EngB-Septin-like GTPase superfamily. Era GTPase family. Monomer.

The protein localises to the cytoplasm. Its subcellular location is the cell membrane. An essential GTPase that binds both GDP and GTP, with rapid nucleotide exchange. Plays a role in 16S rRNA processing and 30S ribosomal subunit biogenesis and possibly also in cell cycle regulation and energy metabolism. The sequence is that of GTPase Era from Streptococcus pyogenes serotype M2 (strain MGAS10270).